Reading from the N-terminus, the 271-residue chain is Thiazole synthase (271 aa).

Lys104 serves as the catalytic Schiff-base intermediate with DXP. 1-deoxy-D-xylulose 5-phosphate is bound by residues Gly165, Ala192–Gly193, and Asn214–Thr215.

Belongs to the ThiG family. Homotetramer. Forms heterodimers with either ThiH or ThiS.

Its subcellular location is the cytoplasm. The enzyme catalyses [ThiS sulfur-carrier protein]-C-terminal-Gly-aminoethanethioate + 2-iminoacetate + 1-deoxy-D-xylulose 5-phosphate = [ThiS sulfur-carrier protein]-C-terminal Gly-Gly + 2-[(2R,5Z)-2-carboxy-4-methylthiazol-5(2H)-ylidene]ethyl phosphate + 2 H2O + H(+). It participates in cofactor biosynthesis; thiamine diphosphate biosynthesis. Catalyzes the rearrangement of 1-deoxy-D-xylulose 5-phosphate (DXP) to produce the thiazole phosphate moiety of thiamine. Sulfur is provided by the thiocarboxylate moiety of the carrier protein ThiS. In vitro, sulfur can be provided by H(2)S. The polypeptide is Thiazole synthase (Burkholderia thailandensis (strain ATCC 700388 / DSM 13276 / CCUG 48851 / CIP 106301 / E264)).